Reading from the N-terminus, the 57-residue chain is Large ribosomal subunit protein bL32 (57 aa).

Residues 1-38 (MAVQQNKPTRSKRGMRRSHDALTAVTSLSVDKTSGEKH) form a disordered region.

This sequence belongs to the bacterial ribosomal protein bL32 family.

This is Large ribosomal subunit protein bL32 from Escherichia coli O7:K1 (strain IAI39 / ExPEC).